The sequence spans 98 residues: DNA-binding protein Fis (98 aa).

Residues 74–93 (QTRAATMMGINRGTLRKKLK) constitute a DNA-binding region (H-T-H motif).

Belongs to the transcriptional regulatory Fis family. In terms of assembly, homodimer.

Activates ribosomal RNA transcription. Plays a direct role in upstream activation of rRNA promoters. The sequence is that of DNA-binding protein Fis from Vibrio parahaemolyticus serotype O3:K6 (strain RIMD 2210633).